The sequence spans 434 residues: uncharacterized protein (434 aa).

The next 5 helical transmembrane spans lie at 27 to 47 (IFLL…QSVI), 64 to 84 (FYLS…FVNW), 244 to 264 (IILA…ATVL), 289 to 309 (VPVN…PSLL), and 387 to 407 (LILT…GAVF).

The protein belongs to the CbiQ family.

The protein localises to the cell membrane. This is an uncharacterized protein from Mycoplasma pneumoniae (strain ATCC 29342 / M129 / Subtype 1) (Mycoplasmoides pneumoniae).